Here is a 481-residue protein sequence, read N- to C-terminus: MSNLLALVVGFVIVIGHLGILVNGLGVNWGTMATHKLPPKTVVQMLKDNNINKVKLFDADETTMGALAGSGLEVMVAIPNDQLKVMTSYDRAKDWVRKNVTRYNFDGGVNITFVAVGNEPFLKSYNGSFINLTFPALANIQNALNEAGLGNSVKATVPLNADVYDSPASNPVPSAGRFRPDIIGQMTQIVDFLGKNNAPITINIYPFLSLYGNDDFPLNYAFFDGAEPINDNGIDYTNVFDANFDTLVSSLKAVGHGDMPIIVGEVGWPTEGDKHANAGSAYRFYNGLLPRLGTNKGTPLRPTYIEVYLFGLLDEDAKSIAPGPFERHWGIFKFDGQPKFPIDLSGQGQSKFLIGAQNVPYLPNKWCTFNPEAKDLTKLAANIDYACTFSDCTALGYGSSCNTLDANGNASYAFNMFFQVKNQDESACYFQGLATITTQNISQGQCNFPIQIVASSASSFSCSSYSLVVLIVWFLLSGMMF.

The signal sequence occupies residues 1-33 (MSNLLALVVGFVIVIGHLGILVNGLGVNWGTMA). Asparagine 99 and asparagine 110 each carry an N-linked (GlcNAc...) asparagine glycan. Glutamate 119 serves as the catalytic Proton donor. Residues asparagine 126 and asparagine 131 are each glycosylated (N-linked (GlcNAc...) asparagine). The active-site Nucleophile is glutamate 265. Residues cysteine 367 and cysteine 428 are joined by a disulfide bond. N-linked (GlcNAc...) asparagine glycans are attached at residues asparagine 409 and asparagine 440. Serine 455 carries GPI-anchor amidated serine lipidation. Residues 456-481 (SASSFSCSSYSLVVLIVWFLLSGMMF) constitute a propeptide, removed in mature form.

It belongs to the glycosyl hydrolase 17 family. In terms of processing, contains two additional disulfide bonds.

Its subcellular location is the secreted. It localises to the cell wall. The protein localises to the cell membrane. It catalyses the reaction Hydrolysis of (1-&gt;3)-beta-D-glucosidic linkages in (1-&gt;3)-beta-D-glucans.. This chain is Glucan endo-1,3-beta-glucosidase 8, found in Arabidopsis thaliana (Mouse-ear cress).